The sequence spans 197 residues: RNA pyrophosphohydrolase (197 aa).

One can recognise a Nudix hydrolase domain in the interval 6–154 (GYRPNVGIVL…KREVYQLALS (149 aa)). The Nudix box motif lies at 38 to 59 (GGIQHGESPEQAMYRELHEEVG).

It belongs to the Nudix hydrolase family. RppH subfamily. Requires a divalent metal cation as cofactor.

In terms of biological role, accelerates the degradation of transcripts by removing pyrophosphate from the 5'-end of triphosphorylated RNA, leading to a more labile monophosphorylated state that can stimulate subsequent ribonuclease cleavage. The polypeptide is RNA pyrophosphohydrolase (Polynucleobacter necessarius subsp. necessarius (strain STIR1)).